A 191-amino-acid chain; its full sequence is Ankyrin repeat domain-containing protein 22 (191 aa).

ANK repeat units lie at residues Asn39–Leu68, Lys72–Leu100, Leu101–Ala130, and Asp134–Ile163.

This Mus musculus (Mouse) protein is Ankyrin repeat domain-containing protein 22 (Ankrd22).